Here is a 178-residue protein sequence, read N- to C-terminus: uncharacterized protein (178 aa).

In terms of domain architecture, N-acetyltransferase spans 9–173 (LTLRKMELED…IDVYMFSLLK (165 aa)).

This is an uncharacterized protein from Bacillus licheniformis.